Consider the following 375-residue polypeptide: Methylthioribose-1-phosphate isomerase (375 aa).

Aspartate 257 acts as the Proton donor in catalysis.

This sequence belongs to the eIF-2B alpha/beta/delta subunits family. MtnA subfamily.

It is found in the cytoplasm. The protein resides in the nucleus. The enzyme catalyses 5-(methylsulfanyl)-alpha-D-ribose 1-phosphate = 5-(methylsulfanyl)-D-ribulose 1-phosphate. It participates in amino-acid biosynthesis; L-methionine biosynthesis via salvage pathway; L-methionine from S-methyl-5-thio-alpha-D-ribose 1-phosphate: step 1/6. Catalyzes the interconversion of methylthioribose-1-phosphate (MTR-1-P) into methylthioribulose-1-phosphate (MTRu-1-P). This is Methylthioribose-1-phosphate isomerase from Leishmania major.